Reading from the N-terminus, the 196-residue chain is Small ribosomal subunit protein uS4c (196 aa).

Residues 17 to 36 (ALPGLTRKTPKSGSNLKKKF) are disordered. Positions 89 to 150 (MRLDNIVFRL…NQRSKRLVQN (62 aa)) constitute an S4 RNA-binding domain.

This sequence belongs to the universal ribosomal protein uS4 family. Part of the 30S ribosomal subunit. Contacts protein S5. The interaction surface between S4 and S5 is involved in control of translational fidelity.

It localises to the plastid. The protein localises to the chloroplast. One of the primary rRNA binding proteins, it binds directly to 16S rRNA where it nucleates assembly of the body of the 30S subunit. In terms of biological role, with S5 and S12 plays an important role in translational accuracy. In Tragus racemosus (Carrot grass), this protein is Small ribosomal subunit protein uS4c (rps4).